A 170-amino-acid chain; its full sequence is Peptide deformylase (170 aa).

Fe cation contacts are provided by Cys91 and His133. Glu134 is an active-site residue. His137 contacts Fe cation.

This sequence belongs to the polypeptide deformylase family. The cofactor is Fe(2+).

The enzyme catalyses N-terminal N-formyl-L-methionyl-[peptide] + H2O = N-terminal L-methionyl-[peptide] + formate. In terms of biological role, removes the formyl group from the N-terminal Met of newly synthesized proteins. Requires at least a dipeptide for an efficient rate of reaction. N-terminal L-methionine is a prerequisite for activity but the enzyme has broad specificity at other positions. The protein is Peptide deformylase of Actinobacillus pleuropneumoniae serotype 7 (strain AP76).